The primary structure comprises 619 residues: Hypermethylated in cancer 2 protein (619 aa).

Positions 46–109 constitute a BTB domain; it reads CDVIIMVENS…IYTGKLLPSD (64 aa). Residues Ser-166, Ser-169, and Ser-197 each carry the phosphoserine modification. Disordered stretches follow at residues 180–293 and 307–426; these read DVRK…VGNS and MDVE…GHTG. The segment covering 214–228 has biased composition (gly residues); it reads LGLGGPAGGEMGLGG. The interval 247-249 is binding to CtBP; the sequence is DLS. Residues 281 to 293 show a composition bias toward polar residues; that stretch reads APTSTSALPVGNS. Residues 337–357 show a composition bias toward basic and acidic residues; that stretch reads KKDWNKKEPVAGSPFDRRETG. A phosphoserine mark is found at Ser-349 and Ser-416. C2H2-type zinc fingers lie at residues 446-468, 509-531, 537-559, 565-587, and 593-615; these read YVCIPCAKGFPSSEQLNAHVETH, FKCSVCEKTYKDPATLRQHEKTH, FPCNICGKMFTQRGTMTRHMRSH, FACDECGMRFTRQYRLTEHMRVH, and YECQLCGGKFTQQRNLISHLRMH.

It belongs to the krueppel C2H2-type zinc-finger protein family. Hic subfamily. Self-associates. Interacts with HIC1.

The protein resides in the nucleus. In terms of biological role, transcriptional repressor. This is Hypermethylated in cancer 2 protein (Hic2) from Mus musculus (Mouse).